The sequence spans 43 residues: uncharacterized protein (43 aa).

The helical transmembrane segment at 21-41 (SSFALIVVLFILLIIVGAAIF) threads the bilayer.

This sequence belongs to the SscA family.

Its subcellular location is the membrane. This is an uncharacterized protein from Bacillus subtilis (strain 168).